The sequence spans 268 residues: Tryptophan synthase alpha chain (268 aa).

Catalysis depends on proton acceptor residues Glu49 and Asp60.

The protein belongs to the TrpA family. Tetramer of two alpha and two beta chains.

The enzyme catalyses (1S,2R)-1-C-(indol-3-yl)glycerol 3-phosphate + L-serine = D-glyceraldehyde 3-phosphate + L-tryptophan + H2O. It functions in the pathway amino-acid biosynthesis; L-tryptophan biosynthesis; L-tryptophan from chorismate: step 5/5. Functionally, the alpha subunit is responsible for the aldol cleavage of indoleglycerol phosphate to indole and glyceraldehyde 3-phosphate. In Escherichia coli O127:H6 (strain E2348/69 / EPEC), this protein is Tryptophan synthase alpha chain.